We begin with the raw amino-acid sequence, 197 residues long: Large ribosomal subunit protein bL25 (197 aa).

It belongs to the bacterial ribosomal protein bL25 family. CTC subfamily. In terms of assembly, part of the 50S ribosomal subunit; part of the 5S rRNA/L5/L18/L25 subcomplex. Contacts the 5S rRNA. Binds to the 5S rRNA independently of L5 and L18.

Functionally, this is one of the proteins that binds to the 5S RNA in the ribosome where it forms part of the central protuberance. This Citrifermentans bemidjiense (strain ATCC BAA-1014 / DSM 16622 / JCM 12645 / Bem) (Geobacter bemidjiensis) protein is Large ribosomal subunit protein bL25.